The following is a 427-amino-acid chain: Enolase (427 aa).

Glutamine 162 is a (2R)-2-phosphoglycerate binding site. The active-site Proton donor is glutamate 206. Residues aspartate 243, glutamate 286, and aspartate 313 each coordinate Mg(2+). 4 residues coordinate (2R)-2-phosphoglycerate: lysine 338, arginine 367, serine 368, and lysine 389. Lysine 338 functions as the Proton acceptor in the catalytic mechanism.

This sequence belongs to the enolase family. Mg(2+) serves as cofactor.

It is found in the cytoplasm. Its subcellular location is the secreted. It localises to the cell surface. The catalysed reaction is (2R)-2-phosphoglycerate = phosphoenolpyruvate + H2O. Its pathway is carbohydrate degradation; glycolysis; pyruvate from D-glyceraldehyde 3-phosphate: step 4/5. Functionally, catalyzes the reversible conversion of 2-phosphoglycerate (2-PG) into phosphoenolpyruvate (PEP). It is essential for the degradation of carbohydrates via glycolysis. The protein is Enolase of Methanopyrus kandleri (strain AV19 / DSM 6324 / JCM 9639 / NBRC 100938).